The following is a 313-amino-acid chain: Homoserine O-succinyltransferase (313 aa).

Catalysis depends on Cys142, which acts as the Acyl-thioester intermediate. Residues Lys163 and Ser192 each coordinate substrate. Catalysis depends on His235, which acts as the Proton acceptor. Residue Glu237 is part of the active site. Residue Arg249 coordinates substrate.

This sequence belongs to the MetA family.

It localises to the cytoplasm. The enzyme catalyses L-homoserine + succinyl-CoA = O-succinyl-L-homoserine + CoA. It participates in amino-acid biosynthesis; L-methionine biosynthesis via de novo pathway; O-succinyl-L-homoserine from L-homoserine: step 1/1. Its function is as follows. Transfers a succinyl group from succinyl-CoA to L-homoserine, forming succinyl-L-homoserine. In Shewanella oneidensis (strain ATCC 700550 / JCM 31522 / CIP 106686 / LMG 19005 / NCIMB 14063 / MR-1), this protein is Homoserine O-succinyltransferase.